Consider the following 264-residue polypeptide: ATP synthase subunit a (264 aa).

Helical transmembrane passes span 29–49, 90–110, 134–154, 177–197, 208–228, and 235–255; these read TWHI…LWIF, IAPL…MDMI, DVNI…FYSI, IPVN…SLAL, LIFI…TLGV, and LIFH…LTIV.

Belongs to the ATPase A chain family. In terms of assembly, F-type ATPases have 2 components, CF(1) - the catalytic core - and CF(0) - the membrane proton channel. CF(1) has five subunits: alpha(3), beta(3), gamma(1), delta(1), epsilon(1). CF(0) has three main subunits: a(1), b(2) and c(9-12). The alpha and beta chains form an alternating ring which encloses part of the gamma chain. CF(1) is attached to CF(0) by a central stalk formed by the gamma and epsilon chains, while a peripheral stalk is formed by the delta and b chains.

Its subcellular location is the cell inner membrane. Functionally, key component of the proton channel; it plays a direct role in the translocation of protons across the membrane. The chain is ATP synthase subunit a from Shewanella baltica (strain OS223).